The following is a 296-amino-acid chain: Phosphoribosylaminoimidazole-succinocarboxamide synthase (296 aa).

Belongs to the SAICAR synthetase family.

The enzyme catalyses 5-amino-1-(5-phospho-D-ribosyl)imidazole-4-carboxylate + L-aspartate + ATP = (2S)-2-[5-amino-1-(5-phospho-beta-D-ribosyl)imidazole-4-carboxamido]succinate + ADP + phosphate + 2 H(+). It functions in the pathway purine metabolism; IMP biosynthesis via de novo pathway; 5-amino-1-(5-phospho-D-ribosyl)imidazole-4-carboxamide from 5-amino-1-(5-phospho-D-ribosyl)imidazole-4-carboxylate: step 1/2. This chain is Phosphoribosylaminoimidazole-succinocarboxamide synthase, found in Desulfotalea psychrophila (strain LSv54 / DSM 12343).